Reading from the N-terminus, the 118-residue chain is UPF0231 protein PM0457 (118 aa).

The protein belongs to the UPF0231 family.

This is UPF0231 protein PM0457 from Pasteurella multocida (strain Pm70).